Reading from the N-terminus, the 150-residue chain is D-aminoacyl-tRNA deacylase (150 aa).

The Gly-cisPro motif, important for rejection of L-amino acids motif lies at 136–137 (GP).

Belongs to the DTD family. As to quaternary structure, homodimer.

It localises to the cytoplasm. The enzyme catalyses glycyl-tRNA(Ala) + H2O = tRNA(Ala) + glycine + H(+). It catalyses the reaction a D-aminoacyl-tRNA + H2O = a tRNA + a D-alpha-amino acid + H(+). Functionally, an aminoacyl-tRNA editing enzyme that deacylates mischarged D-aminoacyl-tRNAs. Also deacylates mischarged glycyl-tRNA(Ala), protecting cells against glycine mischarging by AlaRS. Acts via tRNA-based rather than protein-based catalysis; rejects L-amino acids rather than detecting D-amino acids in the active site. By recycling D-aminoacyl-tRNA to D-amino acids and free tRNA molecules, this enzyme counteracts the toxicity associated with the formation of D-aminoacyl-tRNA entities in vivo and helps enforce protein L-homochirality. In Staphylococcus aureus (strain Mu50 / ATCC 700699), this protein is D-aminoacyl-tRNA deacylase.